The following is a 149-amino-acid chain: Transcriptional regulator MraZ (149 aa).

SpoVT-AbrB domains follow at residues 7–54 (KYVN…GISH) and 83–126 (AVQL…QPQN).

The protein belongs to the MraZ family. As to quaternary structure, forms oligomers.

It localises to the cytoplasm. Its subcellular location is the nucleoid. The chain is Transcriptional regulator MraZ from Rickettsia peacockii (strain Rustic).